Consider the following 627-residue polypeptide: MTNLYEAYDVVVVGAGHAGCEAALACARLGFNTIMLTVSMDNIALMPCNPNIGGTSKGHLVREIDALGGEMGKNIDKTYIQSKMLNQSKGPAVHSLRAQADKMDYCREMRKVVENTDNLTLRQDEVIDILTENNEVTGVKVYSGGVYPCKVVILCTGVYLNARCIYGETSHYTGPNGLPSANHLTESLKKLGIEMYRFKTGTPARIDKRSIDFSKMEEQFGDEKVVPFSFINNPEDIEKEQISCWLTYTNENTHDIIRDNIHRSPLYSGNIKGTGPRYCPSIEDKVVKFPDKDRHQVFIEPEGNYTNEMYISGMSSSLPEDVQFKMYRSVSGLENAKIVRNAYAIEYDCINPMQLKSSLEFMSINGLFSGGQFNGSSGYEEAAAQGLMAGINAARKLSGKEPIVLDRSQAYIGVLIDDLVTKETHEPYRMMTSRAEYRLILRQDNADQRLTRIGHEIGLISEDRYEHLIDKERMIKEEMMRLENSLIGASKEVQEILEGLGTTTLKTGTTLAELVRRPELTYAALAPLDKNREPLPEEVITQVEINFKYDGYIKRQEHQVEQFKKLEGKKIPEDLDYSDVPSLRIEAKQKLNQIKPSSVGQASRISGVSPADISVLLVYLEQIRRKK.

FAD is bound at residue 14-19 (GAGHAG). An NAD(+)-binding site is contributed by 275 to 289 (GPRYCPSIEDKVVKF).

It belongs to the MnmG family. Homodimer. Heterotetramer of two MnmE and two MnmG subunits. FAD serves as cofactor.

The protein resides in the cytoplasm. NAD-binding protein involved in the addition of a carboxymethylaminomethyl (cmnm) group at the wobble position (U34) of certain tRNAs, forming tRNA-cmnm(5)s(2)U34. This Lachnoclostridium phytofermentans (strain ATCC 700394 / DSM 18823 / ISDg) (Clostridium phytofermentans) protein is tRNA uridine 5-carboxymethylaminomethyl modification enzyme MnmG.